The following is a 518-amino-acid chain: Endoglucanase 18 (518 aa).

At 1–35 (MANCVRCCCWLLVLMLMALAITAAVVFVRYKNGEG) the chain is on the cytoplasmic side. The chain crosses the membrane as a helical span at residues 36–56 (VFPFPGVPGAVDHKYADALAV). Residues 57-518 (ALQFFQVQKS…STSSLARSLS (462 aa)) are Extracellular-facing. Residue Asn-71 is glycosylated (N-linked (GlcNAc...) asparagine). The Nucleophile role is filled by Asp-101. N-linked (GlcNAc...) asparagine glycosylation is found at Asn-214, Asn-251, and Asn-272. His-436 is an active-site residue. A glycan (N-linked (GlcNAc...) asparagine) is linked at Asn-477. Residues Asp-482 and Glu-491 contribute to the active site.

It belongs to the glycosyl hydrolase 9 (cellulase E) family.

It is found in the membrane. It carries out the reaction Endohydrolysis of (1-&gt;4)-beta-D-glucosidic linkages in cellulose, lichenin and cereal beta-D-glucans.. In Oryza sativa subsp. japonica (Rice), this protein is Endoglucanase 18.